The sequence spans 421 residues: Subtilisin-like protease 2 (421 aa).

A signal peptide spans 1–16; sequence MQLLNFGLLLLPFVAG. A propeptide spanning residues 17 to 122 is cleaved from the precursor; it reads DLAPQPEPLL…VHPDQHVYLA (106 aa). The region spanning 36–122 is the Inhibitor I9 domain; that stretch reads QYIVTLKEGL…VHPDQHVYLA (87 aa). Positions 131 to 421 constitute a Peptidase S8 domain; sequence RWGLGYMSSK…ERKFTLPKYF (291 aa). Active-site charge relay system residues include aspartate 169 and histidine 201. Asparagine 248, asparagine 261, and asparagine 348 each carry an N-linked (GlcNAc...) asparagine glycan. Catalysis depends on serine 357, which acts as the Charge relay system. The N-linked (GlcNAc...) asparagine glycan is linked to asparagine 388.

It belongs to the peptidase S8 family.

Its subcellular location is the secreted. Functionally, secreted subtilisin-like serine protease with keratinolytic activity that contributes to pathogenicity. This is Subtilisin-like protease 2 (SUB2) from Trichophyton equinum (Horse ringworm fungus).